Consider the following 164-residue polypeptide: ATP synthase subunit b 2 (164 aa).

The helical transmembrane segment at 4–24 (TFWAFVGLVLFLALLVYFEVP) threads the bilayer.

The protein belongs to the ATPase B chain family. As to quaternary structure, F-type ATPases have 2 components, F(1) - the catalytic core - and F(0) - the membrane proton channel. F(1) has five subunits: alpha(3), beta(3), gamma(1), delta(1), epsilon(1). F(0) has three main subunits: a(1), b(2) and c(10-14). The alpha and beta chains form an alternating ring which encloses part of the gamma chain. F(1) is attached to F(0) by a central stalk formed by the gamma and epsilon chains, while a peripheral stalk is formed by the delta and b chains.

Its subcellular location is the cell inner membrane. Its function is as follows. F(1)F(0) ATP synthase produces ATP from ADP in the presence of a proton or sodium gradient. F-type ATPases consist of two structural domains, F(1) containing the extramembraneous catalytic core and F(0) containing the membrane proton channel, linked together by a central stalk and a peripheral stalk. During catalysis, ATP synthesis in the catalytic domain of F(1) is coupled via a rotary mechanism of the central stalk subunits to proton translocation. Functionally, component of the F(0) channel, it forms part of the peripheral stalk, linking F(1) to F(0). This Bartonella henselae (strain ATCC 49882 / DSM 28221 / CCUG 30454 / Houston 1) (Rochalimaea henselae) protein is ATP synthase subunit b 2.